The sequence spans 156 residues: Large ribosomal subunit protein uL15 (156 aa).

Positions 25–48 are disordered; it reads RGIGCGKGKTSGRGHKGQKARSGV. Over residues 34–43 the composition is skewed to basic residues; it reads TSGRGHKGQK.

This sequence belongs to the universal ribosomal protein uL15 family. Part of the 50S ribosomal subunit.

Binds to the 23S rRNA. The protein is Large ribosomal subunit protein uL15 of Wolbachia pipientis wMel.